The following is a 106-amino-acid chain: Ig kappa chain C region, B allele (106 aa).

Residues 5–102 (PTVSIFPPST…SSSPVVKSFN (98 aa)) form the Ig-like domain. Cysteine 26 and cysteine 86 are joined by a disulfide.

This is Ig kappa chain C region, B allele from Rattus norvegicus (Rat).